The sequence spans 504 residues: Cytochrome P450 monooxygenase braC (504 aa).

A helical membrane pass occupies residues 4–24 (LYLPTIWASTLTAATIFIVAV). Cys-448 is a binding site for heme.

Belongs to the cytochrome P450 family. The cofactor is heme.

It is found in the membrane. It participates in secondary metabolite biosynthesis. Functionally, cytochrome P450 monooxygenase; part of the gene cluster that mediates the biosynthesis of the brasilane terpene glycosides brasilane D and E. The biosynthesis starts with the activity of the terpene cyclase braA that converts farnesyl pyrophosphate into the sesquiterpene alcohol trichobrasilenol. Subsequently, trichobrasilenol is glycosylated by the O-glycosyltransferase braB putatively using UDP-GlcNAc as sugar donor to yield brasilane A. The latter then undergoes two rounds of oxidation performed by the cytochrome P450 monooxygenase braC. In the first round braC hydroxylates C-12 forming brasilane D, which serves as substrate in the second round to establish the epoxide at the bond between C-5 and C-10 and oxidize the alcohol at C-12 to an aldehyde leading to the final product brasilane E. This Annulohypoxylon truncatum (Hypoxylon truncatum) protein is Cytochrome P450 monooxygenase braC.